The chain runs to 59 residues: Large ribosomal subunit protein uL30 (59 aa).

The protein belongs to the universal ribosomal protein uL30 family. As to quaternary structure, part of the 50S ribosomal subunit.

This chain is Large ribosomal subunit protein uL30, found in Buchnera aphidicola subsp. Acyrthosiphon kondoi (Acyrthosiphon kondoi symbiotic bacterium).